Consider the following 319-residue polypeptide: Acetyl esterase (319 aa).

An Involved in the stabilization of the negatively charged intermediate by the formation of the oxyanion hole motif is present at residues 91–93 (HGG). Catalysis depends on residues Ser165, Asp262, and His292.

Belongs to the 'GDXG' lipolytic enzyme family. As to quaternary structure, homodimer. Interacts with MalT and MelA.

The protein localises to the cytoplasm. Displays esterase activity towards short chain fatty esters (acyl chain length of up to 8 carbons). Able to hydrolyze triacetylglycerol (triacetin) and tributyrylglycerol (tributyrin), but not trioleylglycerol (triolein) or cholesterol oleate. Negatively regulates MalT activity by antagonizing maltotriose binding. Inhibits MelA galactosidase activity. The chain is Acetyl esterase from Escherichia coli O81 (strain ED1a).